A 406-amino-acid polypeptide reads, in one-letter code: Propionate kinase (406 aa).

Residues Asn11 and Lys18 each contribute to the ATP site. Residue Asn11 participates in Mg(2+) binding. Position 86 (Arg86) interacts with substrate. Asp143 acts as the Proton donor/acceptor in catalysis. ATP-binding positions include His175, 203–207, 278–280, and 326–330; these read HLGNG, DMR, and GIGEN.

Belongs to the acetokinase family. TdcD subfamily. As to quaternary structure, homodimer. Requires Mg(2+) as cofactor.

The catalysed reaction is propanoate + ATP = propanoyl phosphate + ADP. Its pathway is amino-acid degradation; L-threonine degradation via propanoate pathway; propanoate from L-threonine: step 4/4. Its function is as follows. Catalyzes the conversion of propionyl phosphate and ADP to propionate and ATP. This is Propionate kinase from Yersinia enterocolitica serotype O:8 / biotype 1B (strain NCTC 13174 / 8081).